Reading from the N-terminus, the 226-residue chain is Large ribosomal subunit protein uL3 (226 aa).

The residue at position 160 (Gln-160) is an N5-methylglutamine.

Belongs to the universal ribosomal protein uL3 family. In terms of assembly, part of the 50S ribosomal subunit. Forms a cluster with proteins L14 and L19. Methylated by PrmB.

Its function is as follows. One of the primary rRNA binding proteins, it binds directly near the 3'-end of the 23S rRNA, where it nucleates assembly of the 50S subunit. This chain is Large ribosomal subunit protein uL3, found in Leptothrix cholodnii (strain ATCC 51168 / LMG 8142 / SP-6) (Leptothrix discophora (strain SP-6)).